The following is a 402-amino-acid chain: F-box protein At4g22390 (402 aa).

One can recognise an F-box domain in the interval 1 to 49 (MAECPTDLINEMFLRLRATTLVKCRVLSKPCFSLIDSPEFVSSHLRRRL).

This Arabidopsis thaliana (Mouse-ear cress) protein is F-box protein At4g22390.